Reading from the N-terminus, the 2226-residue chain is Rotatin (2226 aa).

The tract at residues 295–345 (ARGTHHSQNPSPGSSSPRPSVVGRTGQRPRGDGQDWDAASSSGSSSHAHVN) is disordered. Low complexity-rich tracts occupy residues 304–318 (PSPG…VVGR) and 332–343 (AASSSGSSSHAH). At Ser-310 the chain carries Phosphoserine. Lys-811 is modified (N6-acetyllysine). The tract at residues 1534-1554 (SRTSQDRDPSSLSTSETTVAP) is disordered. The span at 1543–1554 (SSLSTSETTVAP) shows a compositional bias: polar residues.

The protein belongs to the rotatin family. Interacts with PPP1R35; this interaction allows the mutual recruitment to the centriole.

It is found in the cytoplasm. The protein resides in the cytoskeleton. The protein localises to the cilium basal body. It localises to the microtubule organizing center. Its subcellular location is the centrosome. In terms of biological role, involved in the genetic cascade that governs left-right specification. Plays a role in the maintenance of a normal ciliary structure. Required for correct asymmetric expression of NODAL, LEFTY and PITX2. In Homo sapiens (Human), this protein is Rotatin.